The sequence spans 1304 residues: Myosin-1 (1304 aa).

Residues 1–12 (MAIVKRGVRTKN) are compositionally biased toward basic residues. The disordered stretch occupies residues 1-24 (MAIVKRGVRTKNKQSQQPSKSGIK). Positions 36–730 (VGVSDLTLLS…TLFALEDMRD (695 aa)) constitute a Myosin motor domain. Position 129–136 (129–136 (GESGAGKT)) interacts with ATP. S364 is modified (phosphoserine). The segment at 413–496 (SIGILDIYGF…PGLFAALNDS (84 aa)) is actin-binding. IQ domains are found at residues 734-754 (HNMA…KDDA) and 755-780 (ARLI…YGNG). The TH1 domain occupies 788–978 (RRRMSMLGSR…TVTVRQGLPG (191 aa)). Disordered stretches follow at residues 963 to 1162 (DSYK…TYKA) and 1214 to 1304 (ECDP…DDDW). Composition is skewed to polar residues over residues 964 to 983 (SYKS…SQNP) and 1001 to 1012 (RGSNMRSTSSYQ). Low complexity-rich tracts occupy residues 1029–1052 (QPPV…PQAQ), 1072–1096 (QPHA…PQAQ), and 1120–1140 (PSAP…KKNV). The span at 1141–1156 (APPPPPAAASPPPKPK) shows a compositional bias: pro residues. The 63-residue stretch at 1155–1217 (PKFPTYKAAY…PAAYVVECDP (63 aa)) folds into the SH3 domain. Composition is skewed to low complexity over residues 1217-1227 (PPANSPAGNAK) and 1236-1256 (LNSA…NGAG). Over residues 1292–1304 (DSDEEDEEDDDDW) the composition is skewed to acidic residues.

Belongs to the TRAFAC class myosin-kinesin ATPase superfamily. Myosin family. Phosphorylation of the TEDS site (Ser-364) is required for the polarization of the actin cytoskeleton. Phosphorylation probably activates the myosin-I ATPase activity.

The protein localises to the cytoplasm. It localises to the cytoskeleton. The protein resides in the actin patch. Its function is as follows. Type-I myosin implicated in the organization of the actin cytoskeleton. Required for proper actin cytoskeleton polarization. At the cell cortex, assembles in patch-like structures together with proteins from the actin-polymerizing machinery and promotes actin assembly. Functions as actin nucleation-promoting factor (NPF) for the Arp2/3 complex. The protein is Myosin-1 (MYO1) of Debaryomyces hansenii (strain ATCC 36239 / CBS 767 / BCRC 21394 / JCM 1990 / NBRC 0083 / IGC 2968) (Yeast).